The sequence spans 405 residues: Aurora kinase A (405 aa).

2 stretches are compositionally biased toward polar residues: residues 32-82 (VPSQ…QLQA) and 91-110 (RSLNNTQKSEQPSSSAPGNN). The tract at residues 32-127 (VPSQNPLSAN…KQKNEESKKR (96 aa)) is disordered. Serine 42 and serine 52 each carry phosphoserine. A compositionally biased stretch (basic and acidic residues) spans 111–127 (SEKELATKQKNEESKKR). The Protein kinase domain maps to 134 to 384 (FEIGRPLGKG…LKDVLEHPWI (251 aa)). ATP-binding positions include lysine 144, lysine 163, and 212–214 (EYA). Aspartate 257 functions as the Proton acceptor in the catalytic mechanism. Lysine 259 participates in a covalent cross-link: Glycyl lysine isopeptide (Lys-Gly) (interchain with G-Cter in SUMO2). ATP-binding positions include 261 to 262 (EN) and aspartate 275. The segment at 281 to 294 (HAPSSRRTTLCGTL) is activation segment. Phosphothreonine occurs at positions 288 and 289. Position 343 is a phosphoserine (serine 343). The disordered stretch occupies residues 385-405 (MANSSKPSSSQKSKDSTSKQS). The span at 396 to 405 (KSKDSTSKQS) shows a compositional bias: basic and acidic residues.

It belongs to the protein kinase superfamily. Ser/Thr protein kinase family. Aurora subfamily. Part of a complex composed of NEDD9, AURKA and CTTN; within the complex NEDD9 acts as a scaffold protein and is required for complex formation. Identified in a complex with AUNIP and NIN. Interacts with FBXL7. Interacts with CPEB1, JTB, TACC1, TPX2, PPP2CA, as well as with the protein phosphatase type 1 (PP1) isoforms PPP1CA, PPP1CB and PPP1CC. Also interacts with its substrates ARHGEF2, BORA, KIF2A, PARD3, and p53/TP53. Interaction with BORA promotes phosphorylation of PLK1. Interacts with CIMAP3. Interacts with GADD45A, competing with its oligomerization. Interacts (via C-terminus) with AUNIP (via C-terminus). Interacts with FRY; this interaction facilitates AURKA-mediated PLK1 phosphorylation. Interacts with SIRT2. Interacts with MYCN; interaction is phospho-independent and triggers AURKA activation; AURKA competes with FBXW7 for binding to unphosphorylated MYCN but not for binding to phosphorylated MYCN. Interacts with HNRNPU. Interacts with AAAS. Interacts with KLHL18 and CUL3. Interacts with FOXP1. Interacts with HDAC6; AURKA-mediated phosphorylation of HDAC6 promotes deacetylation of alpha-tubulin. In terms of processing, activated by phosphorylation at Thr-289; this brings about a change in the conformation of the activation segment. Phosphorylation at Thr-289 varies during the cell cycle and is highest during M phase. Autophosphorylated at Thr-289 upon TPX2 binding. Thr-289 can be phosphorylated by several kinases, including PAK and PKA. Protein phosphatase type 1 (PP1) binds AURKA and inhibits its activity by dephosphorylating Thr-289 during mitosis. Phosphorylation at Ser-343 decreases the kinase activity. PPP2CA controls degradation by dephosphorylating Ser-52 at the end of mitosis. Ubiquitinated by the E3 ubiquitin-protein ligase complex SCF(FBXL7) during mitosis, leading to its degradation by the proteasome. Ubiquitinated by CHFR, leading to its degradation by the proteasome. Ubiquitinated by the anaphase-promoting complex (APC), leading to its degradation by the proteasome. Ubiquitinated by the CUL3-KLHL18 ligase leading to its activation at the centrosome which is required for initiating mitotic entry. Ubiquitination mediated by CUL3-KLHL18 ligase does not lead to its degradation by the proteasome.

It localises to the cytoplasm. Its subcellular location is the cytoskeleton. The protein localises to the microtubule organizing center. It is found in the centrosome. The protein resides in the spindle pole. It localises to the centriole. Its subcellular location is the cell projection. The protein localises to the neuron projection. It is found in the cilium. The protein resides in the cilium basal body. It localises to the basolateral cell membrane. It carries out the reaction L-seryl-[protein] + ATP = O-phospho-L-seryl-[protein] + ADP + H(+). It catalyses the reaction L-threonyl-[protein] + ATP = O-phospho-L-threonyl-[protein] + ADP + H(+). With respect to regulation, activation of CDK1, appears to be an upstream event of AURKA activation. Phosphatase inhibitor-2 (PPP1R2) and TPX2 act also as activators. Inactivated by the G2 checkpoint. Inhibited by GADD45A and p53/TP53, and through dephosphorylation by protein phosphatase type 1 (PP1). MLN8054 is also a potent and selective inhibitor. Activated during the early phase of cilia disassembly in the presence of CIMAP3. Inhibited by the small molecule inhibitor VX-680. In terms of biological role, mitotic serine/threonine kinase that contributes to the regulation of cell cycle progression. Associates with the centrosome and the spindle microtubules during mitosis and plays a critical role in various mitotic events including the establishment of mitotic spindle, centrosome duplication, centrosome separation as well as maturation, chromosomal alignment, spindle assembly checkpoint, and cytokinesis. Required for normal spindle positioning during mitosis and for the localization of NUMA1 and DCTN1 to the cell cortex during metaphase. Required for initial activation of CDK1 at centrosomes. Phosphorylates numerous target proteins, including ARHGEF2, BORA, BRCA1, CDC25B, DLGP5, HDAC6, KIF2A, LATS2, NDEL1, PARD3, PPP1R2, PLK1, RASSF1, TACC3, p53/TP53 and TPX2. Phosphorylates MCRS1 which is required for MCRS1-mediated kinetochore fiber assembly and mitotic progression. Regulates KIF2A tubulin depolymerase activity. Important for microtubule formation and/or stabilization. Required for normal axon formation. Plays a role in microtubule remodeling during neurite extension. Also acts as a key regulatory component of the p53/TP53 pathway, and particularly the checkpoint-response pathways critical for oncogenic transformation of cells, by phosphorylating and destabilizing p53/TP53. Phosphorylates its own inhibitors, the protein phosphatase type 1 (PP1) isoforms, to inhibit their activity. Inhibits cilia outgrowth. Required for cilia disassembly via phosphorylation of HDAC6 and subsequent deacetylation of alpha-tubulin. Regulates protein levels of the anti-apoptosis protein BIRC5 by suppressing the expression of the SCF(FBXL7) E3 ubiquitin-protein ligase substrate adapter FBXL7 through the phosphorylation of the transcription factor FOXP1. This Canis lupus familiaris (Dog) protein is Aurora kinase A.